We begin with the raw amino-acid sequence, 226 residues long: UPF0758 protein LL1007 (226 aa).

The 123-residue stretch at 103–225 (QVLSSREYGL…YFSFREEEIR (123 aa)) folds into the MPN domain. 3 residues coordinate Zn(2+): histidine 174, histidine 176, and aspartate 187. The short motif at 174–187 (HNHPSGNLKPSQAD) is the JAMM motif element.

It belongs to the UPF0758 family.

The polypeptide is UPF0758 protein LL1007 (Lactococcus lactis subsp. lactis (strain IL1403) (Streptococcus lactis)).